A 658-amino-acid polypeptide reads, in one-letter code: Protein kinase and PP2C-like domain-containing protein (658 aa).

The Protein kinase domain maps to 30–314 (FTLLSPIAKG…DNVVLELESI (285 aa)). ATP contacts are provided by residues 36 to 44 (IAKGSESVV) and K57. Catalysis depends on D149, which acts as the Proton acceptor. In terms of domain architecture, PPM-type phosphatase spans 392-648 (SCGSFATCGR…DNITVIVVFL (257 aa)). Positions 428, 429, 599, and 639 each coordinate Mn(2+).

It in the N-terminal section; belongs to the protein kinase superfamily. Ser/Thr protein kinase family. The protein in the C-terminal section; belongs to the PP2C family. The cofactor is Mg(2+). Mn(2+) serves as cofactor.

The enzyme catalyses L-seryl-[protein] + ATP = O-phospho-L-seryl-[protein] + ADP + H(+). The catalysed reaction is L-threonyl-[protein] + ATP = O-phospho-L-threonyl-[protein] + ADP + H(+). It carries out the reaction O-phospho-L-seryl-[protein] + H2O = L-seryl-[protein] + phosphate. It catalyses the reaction O-phospho-L-threonyl-[protein] + H2O = L-threonyl-[protein] + phosphate. This chain is Protein kinase and PP2C-like domain-containing protein, found in Arabidopsis thaliana (Mouse-ear cress).